Reading from the N-terminus, the 282-residue chain is MVTRKPAVAGMFYEASKDGLINQIKWSIEHELGPKSTMNVKENRQYVLSVIVPHAGYVYSGPVAAHAYVEVGKYIKPKVFVIIGPNHYGVGSPAAIMTSGTWETPLGQVEIDEEVAKQIKAKVKDLAEDPIAFEREHSIEVQVPFIQYLFPGSRIVPIVLWNQTIDLSRRLGSAISEVIDGRAGEVVVVASSDLNHYEPHEVTTDKDMKVIERILNMDEEGFYTVMDKYDVSVCGFGAIMTAIVYSRKQGSTGVKLLKHATSGDTSGYLLETVGYASIAFYK.

The protein belongs to the MEMO1 family.

This is MEMO1 family protein Cmaq_1590 from Caldivirga maquilingensis (strain ATCC 700844 / DSM 13496 / JCM 10307 / IC-167).